A 634-amino-acid chain; its full sequence is Sodium-dependent neutral amino acid transporter B(0)AT1 (634 aa).

The Cytoplasmic segment spans residues 1–41 (MVRLVLPNPGLDTRILSLAELETIEQEEASSRPKWDNKAQY). Ser17 is subject to Phosphoserine. The chain crosses the membrane as a helical span at residues 42-62 (LLTCVGFCVGLGNVWRFPYLC). The Extracellular segment spans residues 63 to 65 (QSH). Residues 66-86 (GGGAFMIPFLILLVLEGIPLL) traverse the membrane as a helical segment. The Cytoplasmic segment spans residues 87–120 (HLEFAIGQRLRRGSLGVWSSIHPALKGVGLTSML). The helical transmembrane segment at 121–141 (VSFVVGLYYNTIISWIMWYLF) threads the bilayer. Residues 142-192 (NSFQEPLPWSECPLNENQTGYVDECARSSPVDYFWYRETLNISTSISDSGS) are Extracellular-facing. N-linked (GlcNAc...) asparagine glycosylation is found at Asn158 and Asn182. A helical membrane pass occupies residues 193–213 (IQWRMLLCLACAWSVLYMCTI). Topologically, residues 214 to 221 (RGIETTGK) are cytoplasmic. A helical transmembrane segment spans residues 222–242 (VVYITSTLPYVVLTIFLIRGL). At 243-268 (TLKGATKGIIYLFTPNVTELANPVTW) the chain is on the extracellular side. Asn258 carries N-linked (GlcNAc...) asparagine glycosylation. A helical transmembrane segment spans residues 269-289 (LDAGAQVFFSFSLAFGGLISF). The Cytoplasmic segment spans residues 290–304 (SSYNSVHNNCERDSV). A helical transmembrane segment spans residues 305-325 (IVSIINGFTSVYVAIVIYSII). Over 326 to 413 (GFRATQRYDD…TEAITKMPVS (88 aa)) the chain is Extracellular. N-linked (GlcNAc...) asparagine glycans are attached at residues Asn354 and Asn368. Residues 414–434 (PLWSVLFFIMLFCLGLSSMFG) form a helical membrane-spanning segment. Over 435-456 (NMEGVVVPLQDLKVIPPKWPKE) the chain is Cytoplasmic. The helical transmembrane segment at 457–477 (LLTGLICLGTFLIGFIFTLNS) threads the bilayer. At 478–487 (GQYWLSLLDS) the chain is on the extracellular side. A helical membrane pass occupies residues 488–508 (YAVSIPLLIIAFCEMFSVVYV). The Cytoplasmic portion of the chain corresponds to 509-531 (YGVDRFNKDIEFMIGHKPNIFWQ). The helical transmembrane segment at 532-552 (VTWRVVSPLLMLIILVFFFVV) threads the bilayer. Residues 553–581 (QVSQELTYSIWNPGYEEFPKSQKISHPNW) are Extracellular-facing. A helical membrane pass occupies residues 582 to 602 (VYAVVVIVAGVPSLTIPSYAI). Over 603-634 (YKLIRNCCQKPGDRQGLVSTLSTASMNGDLKY) the chain is Cytoplasmic. At Ser627 the chain carries Phosphoserine.

It belongs to the sodium:neurotransmitter symporter (SNF) (TC 2.A.22) family. SLC6A19 subfamily. Interacts in a tissue-specific manner with ACE2 in small intestine and with CLTRN in the kidney. Interacts with CLTRN; this interaction is required for trafficking of SLC6A19 to the plasma membrane and for its catalytic activation in kidneys. Interacts with ACE2; this interaction is required for trafficking of SLC6A19 to the plasma membrane and for its catalytic activation in intestine. Interacts with ANPEP; the interaction positively regulates its amino acid transporter activity.

It is found in the membrane. It carries out the reaction L-alanine(in) + Na(+)(in) = L-alanine(out) + Na(+)(out). The enzyme catalyses L-cysteine(in) + Na(+)(in) = L-cysteine(out) + Na(+)(out). It catalyses the reaction L-glutamine(in) + Na(+)(in) = L-glutamine(out) + Na(+)(out). The catalysed reaction is glycine(in) + Na(+)(in) = glycine(out) + Na(+)(out). It carries out the reaction L-isoleucine(in) + Na(+)(in) = L-isoleucine(out) + Na(+)(out). The enzyme catalyses L-leucine(in) + Na(+)(in) = L-leucine(out) + Na(+)(out). It catalyses the reaction L-methionine(in) + Na(+)(in) = L-methionine(out) + Na(+)(out). The catalysed reaction is L-phenylalanine(in) + Na(+)(in) = L-phenylalanine(out) + Na(+)(out). It carries out the reaction L-serine(in) + Na(+)(in) = L-serine(out) + Na(+)(out). The enzyme catalyses L-tryptophan(in) + Na(+)(in) = L-tryptophan(out) + Na(+)(out). It catalyses the reaction L-tyrosine(in) + Na(+)(in) = L-tyrosine(out) + Na(+)(out). The catalysed reaction is L-valine(in) + Na(+)(in) = L-valine(out) + Na(+)(out). Transporter that mediates resorption of neutral amino acids across the apical membrane of renal and intestinal epithelial cells. This uptake is sodium-dependent and chloride-independent. Requires CLTRN in kidney or ACE2 in intestine for cell surface expression and amino acid transporter activity. The polypeptide is Sodium-dependent neutral amino acid transporter B(0)AT1 (SLC6A19) (Pongo abelii (Sumatran orangutan)).